Reading from the N-terminus, the 359-residue chain is Phosphoserine aminotransferase (359 aa).

Arg41 provides a ligand contact to L-glutamate. Residues 75–76 (AS), Trp101, Thr152, Asp171, and Gln194 each bind pyridoxal 5'-phosphate. Lys195 carries the post-translational modification N6-(pyridoxal phosphate)lysine. 236–237 (NT) contributes to the pyridoxal 5'-phosphate binding site.

The protein belongs to the class-V pyridoxal-phosphate-dependent aminotransferase family. SerC subfamily. In terms of assembly, homodimer. It depends on pyridoxal 5'-phosphate as a cofactor.

The protein resides in the cytoplasm. It carries out the reaction O-phospho-L-serine + 2-oxoglutarate = 3-phosphooxypyruvate + L-glutamate. The enzyme catalyses 4-(phosphooxy)-L-threonine + 2-oxoglutarate = (R)-3-hydroxy-2-oxo-4-phosphooxybutanoate + L-glutamate. The protein operates within amino-acid biosynthesis; L-serine biosynthesis; L-serine from 3-phospho-D-glycerate: step 2/3. It participates in cofactor biosynthesis; pyridoxine 5'-phosphate biosynthesis; pyridoxine 5'-phosphate from D-erythrose 4-phosphate: step 3/5. Functionally, catalyzes the reversible conversion of 3-phosphohydroxypyruvate to phosphoserine and of 3-hydroxy-2-oxo-4-phosphonooxybutanoate to phosphohydroxythreonine. In Acinetobacter baylyi (strain ATCC 33305 / BD413 / ADP1), this protein is Phosphoserine aminotransferase.